The sequence spans 742 residues: Catalase-peroxidase (742 aa).

The segment at 1–43 is disordered; the sequence is MSDSCPVAHEGNTQSTSESENPVIPSPTPAANRPRNNRDWWPN. Residues 11–20 show a composition bias toward polar residues; that stretch reads GNTQSTSESE. Positions 109–231 form a cross-link, tryptophyl-tyrosyl-methioninium (Trp-Tyr) (with M-257); sequence WHAAGTYRIA…LGAVQMGLIY (123 aa). Residue His-110 is the Proton acceptor of the active site. A cross-link (tryptophyl-tyrosyl-methioninium (Tyr-Met) (with W-109)) is located at residues 231–257; it reads YVNPEGPNGQPDPLAAARDIRETFSRM. A heme b-binding site is contributed by His-272.

It belongs to the peroxidase family. Peroxidase/catalase subfamily. Homodimer or homotetramer. Requires heme b as cofactor. In terms of processing, formation of the three residue Trp-Tyr-Met cross-link is important for the catalase, but not the peroxidase activity of the enzyme.

It carries out the reaction H2O2 + AH2 = A + 2 H2O. The enzyme catalyses 2 H2O2 = O2 + 2 H2O. In terms of biological role, bifunctional enzyme with both catalase and broad-spectrum peroxidase activity. The polypeptide is Catalase-peroxidase (Rhodococcus jostii (strain RHA1)).